We begin with the raw amino-acid sequence, 305 residues long: tRNA-splicing endonuclease (305 aa).

Residues Tyr246, His257, and Lys287 contribute to the active site.

It belongs to the tRNA-intron endonuclease family. Archaeal long subfamily. Homodimer.

The enzyme catalyses pretRNA = a 3'-half-tRNA molecule with a 5'-OH end + a 5'-half-tRNA molecule with a 2',3'-cyclic phosphate end + an intron with a 2',3'-cyclic phosphate and a 5'-hydroxyl terminus.. Endonuclease that removes tRNA introns. Cleaves pre-tRNA at the 5'- and 3'-splice sites to release the intron. The products are an intron and two tRNA half-molecules bearing 2',3' cyclic phosphate and 5'-OH termini. Recognizes a pseudosymmetric substrate in which 2 bulged loops of 3 bases are separated by a stem of 4 bp. The sequence is that of tRNA-splicing endonuclease from Archaeoglobus fulgidus (strain ATCC 49558 / DSM 4304 / JCM 9628 / NBRC 100126 / VC-16).